We begin with the raw amino-acid sequence, 136 residues long: Lymphocyte antigen 6E (136 aa).

Residues 1–26 (MSATSNMRVFLPVLLAALLGMEQVHS) form the signal peptide. A UPAR/Ly6 domain is found at 27–118 (LMCFSCTDQK…AGLGLRASIP (92 aa)). 5 disulfide bridges follow: cysteine 29-cysteine 54, cysteine 32-cysteine 41, cysteine 47-cysteine 76, cysteine 80-cysteine 98, and cysteine 99-cysteine 104. A glycan (N-linked (GlcNAc...) asparagine) is linked at asparagine 105. Residue alanine 108 is the site of GPI-anchor amidated alanine attachment. A propeptide spans 109 to 136 (AGLGLRASIPLLGLGLLLSLLALLQLSP) (removed in mature form).

As to quaternary structure, interacts with CHRNA4. Interacts with CD3Z/CD247. As to expression, ubiquitously expressed in mouse adult tissues with maximal expression in the lung and the salivary gland. Expression is strikingly lower in the fetal tissues except for the placenta. Present in thymus where its expression is observed in immature thymocytes and thymic stromal cells. Also found on functionally active T-cells as well as B-cells and thymic dendritic cells.

It is found in the cell membrane. In terms of biological role, GPI-anchored cell surface protein that regulates T-lymphocytes proliferation, differentiation, and activation. Regulates the T-cell receptor (TCR) signaling by interacting with component CD3Z/CD247 at the plasma membrane, leading to CD3Z/CD247 phosphorylation modulation. Restricts the entry of murine coronavirus, mouse hepatitis virus, by interfering with spike protein-mediated membrane fusion. Also plays an essential role in placenta formation by acting as the main receptor for syncytin-A (SynA). Therefore, participates in the normal fusion of syncytiotrophoblast layer I (SynT-I) and in the proper morphogenesis of both fetal and maternal vasculatures within the placenta. May also act as a modulator of nicotinic acetylcholine receptors (nAChRs) activity. In vitro inhibits alpha-3:beta-4-containing nAChRs maximum response. The sequence is that of Lymphocyte antigen 6E from Mus musculus (Mouse).